The sequence spans 196 residues: Nucleoside triphosphate pyrophosphatase (196 aa).

The active-site Proton acceptor is the Asp-73.

It belongs to the Maf family. A divalent metal cation is required as a cofactor.

It is found in the cytoplasm. It catalyses the reaction a ribonucleoside 5'-triphosphate + H2O = a ribonucleoside 5'-phosphate + diphosphate + H(+). The catalysed reaction is a 2'-deoxyribonucleoside 5'-triphosphate + H2O = a 2'-deoxyribonucleoside 5'-phosphate + diphosphate + H(+). Its function is as follows. Nucleoside triphosphate pyrophosphatase. May have a dual role in cell division arrest and in preventing the incorporation of modified nucleotides into cellular nucleic acids. The protein is Nucleoside triphosphate pyrophosphatase of Maricaulis maris (strain MCS10) (Caulobacter maris).